We begin with the raw amino-acid sequence, 504 residues long: 2-isopropylmalate synthase (504 aa).

The 262-residue stretch at 6–267 (IIVFDTTLRD…YTDINFKEIY (262 aa)) folds into the Pyruvate carboxyltransferase domain. D15, H201, H203, and N237 together coordinate Mn(2+). Residues 391–504 (EIIALSSSEC…ALNSYISMKQ (114 aa)) form a regulatory domain region.

The protein belongs to the alpha-IPM synthase/homocitrate synthase family. LeuA type 1 subfamily. In terms of assembly, homodimer. The cofactor is Mn(2+).

It localises to the cytoplasm. It catalyses the reaction 3-methyl-2-oxobutanoate + acetyl-CoA + H2O = (2S)-2-isopropylmalate + CoA + H(+). It functions in the pathway amino-acid biosynthesis; L-leucine biosynthesis; L-leucine from 3-methyl-2-oxobutanoate: step 1/4. In terms of biological role, catalyzes the condensation of the acetyl group of acetyl-CoA with 3-methyl-2-oxobutanoate (2-ketoisovalerate) to form 3-carboxy-3-hydroxy-4-methylpentanoate (2-isopropylmalate). The polypeptide is 2-isopropylmalate synthase (Campylobacter hominis (strain ATCC BAA-381 / DSM 21671 / CCUG 45161 / LMG 19568 / NCTC 13146 / CH001A)).